Here is a 674-residue protein sequence, read N- to C-terminus: Polyunsaturated fatty acid 5-lipoxygenase (674 aa).

The 117-residue stretch at 2–118 folds into the PLAT domain; sequence PSYTVTVATG…EIVLRDGRAK (117 aa). Residues Gly-17, Thr-18, Asp-19, Asn-44, Asp-45, Glu-47, Asp-79, and Asp-80 each coordinate Ca(2+). Residues 119-674 enclose the Lipoxygenase domain; the sequence is LARDDQIHIL…PDRIPNSVAI (556 aa). Ser-272 is modified (phosphoserine). Fe cation-binding residues include His-368 and His-373. A Phosphoserine modification is found at Ser-524. Residues His-551, Asn-555, and Ile-674 each contribute to the Fe cation site.

This sequence belongs to the lipoxygenase family. In terms of assembly, homodimer. Interacts with ALOX5AP and LTC4S. Interacts with COTL1, the interaction is required for stability and efficient catalytic activity. Interacts with PIK3R1; this interaction bridges ALOX5 with CD40 after CD40 ligation in B cells and leads to the production of reactive oxygen species (ROS). Interacts (via PLAT domain) with DICER1 (via Dicer dsRNA-binding fold domain); this interaction enhances arachidonate 5-lipoxygenase activity and modifies the miRNA precursor processing activity of DICER1. Fe cation is required as a cofactor. Post-translationally, serine phosphorylation by MAPKAPK2 is stimulated by arachidonic acid. Phosphorylation on Ser-524 by PKA has an inhibitory effect. Phosphorylation on Ser-272 prevents export from the nucleus. Phosphorylation at Ser-524 is stimulated by 8-bromo-3',5'-cyclic AMP or prostaglandin E2. As to expression, expressed in skin Langerhans cells and their emigrated counterparts in draining lymph nodes. Highly expressed in circulating leukocytes.

It localises to the cytoplasm. Its subcellular location is the nucleus matrix. The protein resides in the nucleus membrane. It is found in the perinuclear region. The protein localises to the cytosol. It localises to the nucleus envelope. Its subcellular location is the nucleus intermembrane space. The catalysed reaction is (5Z,8Z,11Z,14Z)-eicosatetraenoate + O2 = (5S)-hydroperoxy-(6E,8Z,11Z,14Z)-eicosatetraenoate. It catalyses the reaction (5Z,8Z,11Z,14Z)-eicosatetraenoate + O2 = leukotriene A4 + H2O. It carries out the reaction (5Z,8Z,11Z,14Z)-eicosatetraenoate + O2 = (8S)-hydroperoxy-(5Z,9E,11Z,14Z)-eicosatetraenoate. The enzyme catalyses (5Z,8Z,11Z,14Z)-eicosatetraenoate + O2 = (12S)-hydroperoxy-(5Z,8Z,10E,14Z)-eicosatetraenoate. The catalysed reaction is 18-HEPE + O2 = (5S)-hydroperoxy-18-hydroxy-(7E,9E,11Z,14Z,16E)-eicosapentaenoate. It catalyses the reaction (18R)-hydroxy-(5Z,8Z,11Z,14Z,16E)-eicosapentaenoate + O2 = (5S)-hydroperoxy-(18R)-hydroxy-(6E,8Z,11Z,14Z,16E)-eicosapentaenoate. It carries out the reaction (18S)-hydroxy-(5Z,8Z,11Z,14Z,16E)-eicosapentaenoate + O2 = (5S)-hydroperoxy-(18S)-hydroxy-(6E,8Z,11Z,14Z,16E)-eicosapentaenoate. The enzyme catalyses (5S)-hydroperoxy-(18S)-hydroxy-(6E,8Z,11Z,14Z,16E)-eicosapentaenoate = (5S,6S)-epoxy-(18S)-hydroxy-(7E,9E,11Z,14Z,16E)-eicosapentaenoate + H2O. The catalysed reaction is (5S)-hydroperoxy-(18R)-hydroxy-(6E,8Z,11Z,14Z,16E)-eicosapentaenoate = (5S,6S)-epoxy-(18R)-hydroxy-(7E,9E,11Z,14Z,16E)-eicosapentaenoate + H2O. It catalyses the reaction (5S)-hydroperoxy-18-hydroxy-(7E,9E,11Z,14Z,16E)-eicosapentaenoate = (5S,6S)-epoxy-18-hydroxy-(7E,9E,11Z,14Z,16E)-eicosapentaenoate + H2O. It carries out the reaction (15S)-hydroxy-(5Z,8Z,11Z,13E)-eicosatetraenoate + O2 = (5S)-hydroperoxy-(15S)-hydroxy-(6E,8Z,11Z,13E)-eicosatetraenoate. The enzyme catalyses (5S)-hydroperoxy-(6E,8Z,11Z,14Z)-eicosatetraenoate = leukotriene A4 + H2O. The catalysed reaction is (5Z,8Z)-eicosadienoate + O2 = (5S)-hydroperoxy-(6E,8Z)-eicosadienoate. It catalyses the reaction (12S)-hydroxy-(5Z,8Z,10E,14Z)-eicosatetraenoate + O2 = (5S)-hydroperoxy-(12S)-hydroxy-(6E,8Z,10E,14Z)-eicosatetraenoate. It carries out the reaction (5Z,8Z,11Z,14Z,17Z)-eicosapentaenoate + O2 = 5-hydroperoxy-(6E,8Z,11Z,14Z,17Z)-eicosapentaenoate. The enzyme catalyses (4Z,7Z,10Z,13Z,16Z,19Z)-docosahexaenoate + O2 = (14S)-hydroperoxy-(4Z,7Z,10Z,12E,16Z,19Z)-docosahexaenoate. The catalysed reaction is (4Z,7Z,10Z,13Z,16Z,19Z)-docosahexaenoate + O2 = (7S)-hydroperoxy-(4Z,8E,10Z,13Z,16Z,19Z)-docosahexaenoate. It catalyses the reaction (4Z,7Z,10Z,13Z,16Z,19Z)-docosahexaenoate + O2 = (17S)-hydroperoxy-(4Z,7Z,10Z,13Z,15E,19Z)-docosahexaenoate. The protein operates within lipid metabolism; leukotriene A4 biosynthesis. Catalyzes the oxygenation of arachidonate to 5-hydroperoxyeicosatetraenoate (5-HPETE) followed by the dehydration to 5,6- epoxyeicosatetraenoate (Leukotriene A4/LTA4), the first two steps in the biosynthesis of leukotrienes, which are potent mediators of inflammation. Also catalyzes the oxygenation of arachidonic acid into 8-hydroperoxyicosatetraenoic acid (8-HPETE) and 12-hydroperoxyicosatetraenoic acid (12-HPETE). Displays lipoxin synthase activity being able to convert (15S)-HETE into a conjugate tetraene. Although arachidonate is the preferred substrate, this enzyme can also metabolize oxidized fatty acids derived from arachidonate such as (15S)-HETE, eicosapentaenoate (EPA) such as (18R)- and (18S)-HEPE or docosahexaenoate (DHA) which lead to the formation of specialized pro-resolving mediators (SPM) lipoxin and resolvins E and D respectively, therefore it participates in anti-inflammatory responses. Oxidation of DHA directly inhibits endothelial cell proliferation and sprouting angiogenesis via peroxisome proliferator-activated receptor gamma (PPARgamma). It does not catalyze the oxygenation of linoleic acid and does not convert (5S)-HETE to lipoxin isomers. In addition to inflammatory processes, participates in dendritic cell migration, wound healing through an antioxidant mechanism based on heme oxygenase-1 (HO-1) regulation expression, monocyte adhesion to the endothelium via ITGAM expression on monocytes. Moreover, it helps establish an adaptive humoral immunity by regulating primary resting B cells and follicular helper T cells and participates in the CD40-induced production of reactive oxygen species (ROS) after CD40 ligation in B cells through interaction with PIK3R1 that bridges ALOX5 with CD40. May also play a role in glucose homeostasis, regulation of insulin secretion and palmitic acid-induced insulin resistance via AMPK. Can regulate bone mineralization and fat cell differentiation increases in induced pluripotent stem cells. In Mus musculus (Mouse), this protein is Polyunsaturated fatty acid 5-lipoxygenase.